The following is a 67-amino-acid chain: Sperm protamine P1 (67 aa).

Residues 1–67 (MASYRNSRSR…RRRKRNNENK (67 aa)) are disordered. Composition is skewed to basic residues over residues 7 to 25 (SRSR…RSRV) and 34 to 67 (RSSR…NENK).

The protein belongs to the protamine P1 family. In terms of tissue distribution, testis.

The protein resides in the nucleus. The protein localises to the chromosome. Protamines substitute for histones in the chromatin of sperm during the haploid phase of spermatogenesis. They compact sperm DNA into a highly condensed, stable and inactive complex. In Isoodon macrourus (Short-nosed bandicoot), this protein is Sperm protamine P1 (PRM1).